A 168-amino-acid chain; its full sequence is Transcription antitermination protein NusB (168 aa).

Belongs to the NusB family.

Functionally, involved in transcription antitermination. Required for transcription of ribosomal RNA (rRNA) genes. Binds specifically to the boxA antiterminator sequence of the ribosomal RNA (rrn) operons. The sequence is that of Transcription antitermination protein NusB from Prosthecochloris aestuarii (strain DSM 271 / SK 413).